The chain runs to 326 residues: Methionine import ATP-binding protein MetN (326 aa).

The region spanning 1–226 is the ABC transporter domain; it reads MVFYTIGPQT…PQQPITRQFV (226 aa). ATP is bound at residue 23–30; sequence GYSGAGKS.

It belongs to the ABC transporter superfamily. Methionine importer (TC 3.A.1.24) family. The complex is composed of two ATP-binding proteins (MetN), two transmembrane proteins (MetI) and a solute-binding protein (MetQ).

It is found in the cell inner membrane. It carries out the reaction L-methionine(out) + ATP + H2O = L-methionine(in) + ADP + phosphate + H(+). The enzyme catalyses D-methionine(out) + ATP + H2O = D-methionine(in) + ADP + phosphate + H(+). Its function is as follows. Part of the ABC transporter complex MetNIQ involved in methionine import. Responsible for energy coupling to the transport system. The protein is Methionine import ATP-binding protein MetN of Erwinia pyrifoliae (strain DSM 12162 / Ep1/96).